The sequence spans 86 residues: Exodeoxyribonuclease 7 small subunit (86 aa).

Residues 67-86 (RVSPASGGATEAPAPAERDR) form a disordered region.

The protein belongs to the XseB family. As to quaternary structure, heterooligomer composed of large and small subunits.

It localises to the cytoplasm. The catalysed reaction is Exonucleolytic cleavage in either 5'- to 3'- or 3'- to 5'-direction to yield nucleoside 5'-phosphates.. Its function is as follows. Bidirectionally degrades single-stranded DNA into large acid-insoluble oligonucleotides, which are then degraded further into small acid-soluble oligonucleotides. The sequence is that of Exodeoxyribonuclease 7 small subunit from Beutenbergia cavernae (strain ATCC BAA-8 / DSM 12333 / CCUG 43141 / JCM 11478 / NBRC 16432 / NCIMB 13614 / HKI 0122).